The chain runs to 362 residues: EARP-interacting protein 1 (362 aa).

4 WD repeats span residues 61–108 (HPAG…RTLE), 206–246 (AHIH…SALT), 250–290 (PHAH…SEQQ), and 319–359 (EHED…KYAL).

This sequence belongs to the WD repeat EIPR1 family. As to expression, expressed in the hypodermis and the pharynx.

It is found in the cytoplasm. Its function is as follows. Plays a role in the trafficking of cargo to dense-core vesicles, probably through association with the endosome-associated recycling protein (EARP) complex. Important for neuronal function. The sequence is that of EARP-interacting protein 1 from Caenorhabditis elegans.